Here is a 255-residue protein sequence, read N- to C-terminus: Menaquinol:cytochrome c reductase cytochrome c subunit (255 aa).

3 helical membrane-spanning segments follow: residues 46 to 62 (WMVG…LTIV), 104 to 124 (VVGA…APFL), and 137 to 157 (VAVG…WQSV). Residues 178-253 (DTNAEGYKVF…ELAKFISETT (76 aa)) enclose the Cytochrome c domain. The heme c site is built by C192, C195, and H196.

It belongs to the cytochrome b family. In terms of assembly, the main subunits of the menaquinol:cytochrome c complex are a Rieske-type iron-sulfur protein (QcrA), a cytochrome b (QcrB) and a cytochrome c (QcrC). The cofactor is heme c.

It localises to the cell membrane. Functionally, component of the menaquinol:cytochrome c reductase complex. The polypeptide is Menaquinol:cytochrome c reductase cytochrome c subunit (qcrC) (Bacillus subtilis (strain 168)).